A 179-amino-acid chain; its full sequence is Stress response regulator gls24 homolog (179 aa).

Positions Thr147–Lys179 are disordered. Basic and acidic residues predominate over residues Gly165–Lys179.

It belongs to the asp23 family.

This Streptococcus pyogenes serotype M28 (strain MGAS6180) protein is Stress response regulator gls24 homolog.